The chain runs to 115 residues: Mediator of RNA polymerase II transcription subunit 9 (115 aa).

Residues 1-31 (MATGGTVRPAEEPEEEEEEEDEAVEEEEEED) are disordered. Residues 12 to 31 (EPEEEEEEEDEAVEEEEEED) are compositionally biased toward acidic residues. Positions 31 to 107 (DYTFLPLVHD…SELLQKYKSL (77 aa)) form a coiled coil.

Belongs to the Mediator complex subunit 9 family. Component of the Mediator complex.

The protein resides in the nucleus. Functionally, component of the Mediator complex, a coactivator involved in the regulated transcription of nearly all RNA polymerase II-dependent genes. Mediator functions as a bridge to convey information from gene-specific regulatory proteins to the basal RNA polymerase II transcription machinery. Mediator is recruited to promoters by direct interactions with regulatory proteins and serves as a scaffold for the assembly of a functional preinitiation complex with RNA polymerase II and the general transcription factors. This is Mediator of RNA polymerase II transcription subunit 9 (med9) from Xenopus laevis (African clawed frog).